A 298-amino-acid chain; its full sequence is Golgi to ER traffic protein 2 (298 aa).

Over Met1–Leu164 the chain is Cytoplasmic. The disordered stretch occupies residues Ile40–Ala92. Residues Ser42 to Val55 are compositionally biased toward low complexity. Residues Leu56 to Asp67 show a composition bias toward basic and acidic residues. Residues Trp165–Tyr185 form a helical membrane-spanning segment. At Ile186–Asp211 the chain is on the lumenal side. Residues Phe212 to Phe231 traverse the membrane as a helical segment. At His232 to Glu275 the chain is on the cytoplasmic side. The chain crosses the membrane as a helical span at residues Leu276 to Phe296. Residues Ala297–Asn298 are Lumenal-facing.

It belongs to the GET2 family. Component of the Golgi to ER traffic (GET) complex, which is composed of GET1, GET2 and GET3. Within the complex, GET1 and GET2 form a heterotetramer which is stabilized by phosphatidylinositol binding and which binds to the GET3 homodimer.

It is found in the endoplasmic reticulum membrane. The protein resides in the golgi apparatus membrane. Its function is as follows. Required for the post-translational delivery of tail-anchored (TA) proteins to the endoplasmic reticulum. Together with GET1, acts as a membrane receptor for soluble GET3, which recognizes and selectively binds the transmembrane domain of TA proteins in the cytosol. The GET complex cooperates with the HDEL receptor ERD2 to mediate the ATP-dependent retrieval of resident ER proteins that contain a C-terminal H-D-E-L retention signal from the Golgi to the ER. This chain is Golgi to ER traffic protein 2, found in Candida albicans (strain SC5314 / ATCC MYA-2876) (Yeast).